The primary structure comprises 296 residues: 5'-3' exonuclease (296 aa).

One can recognise a 5'-3' exonuclease domain in the interval 175-262 (VMPKALIDIK…VPLACTLKDA (88 aa)).

Its function is as follows. 5'-3' exonuclease acting preferentially on double-stranded DNA. This chain is 5'-3' exonuclease (ypcP), found in Bacillus subtilis (strain 168).